A 101-amino-acid polypeptide reads, in one-letter code: Putative pterin-4-alpha-carbinolamine dehydratase (101 aa).

This sequence belongs to the pterin-4-alpha-carbinolamine dehydratase family.

The enzyme catalyses (4aS,6R)-4a-hydroxy-L-erythro-5,6,7,8-tetrahydrobiopterin = (6R)-L-erythro-6,7-dihydrobiopterin + H2O. This is Putative pterin-4-alpha-carbinolamine dehydratase from Rhizobium johnstonii (strain DSM 114642 / LMG 32736 / 3841) (Rhizobium leguminosarum bv. viciae).